Reading from the N-terminus, the 163-residue chain is Single-stranded DNA-binding protein 2 (163 aa).

In terms of domain architecture, SSB spans M1–E104. Residues R109–F163 are disordered. Residues G119–S130 show a composition bias toward low complexity. A compositionally biased stretch (polar residues) spans Y131–N140. Residues D158–F163 carry the Important for interaction with partner proteins motif.

Homotetramer.

Its function is as follows. Plays an important role in DNA replication, recombination and repair. Binds to ssDNA and to an array of partner proteins to recruit them to their sites of action during DNA metabolism. This is Single-stranded DNA-binding protein 2 (ssb2) from Streptococcus pyogenes serotype M18 (strain MGAS8232).